The primary structure comprises 167 residues: 16S rRNA aminocarboxypropyltransferase (167 aa).

S-adenosyl-L-methionine contacts are provided by Thr-17, Val-62, Leu-84, Tyr-99, and Ser-103.

It belongs to the TDD superfamily. TSR3 family.

The protein resides in the cytoplasm. It carries out the reaction an N(1)-methylpseudouridine in rRNA + S-adenosyl-L-methionine = N(1)-methyl-N(3)-[(3S)-3-amino-3-carboxypropyl]pseudouridine in rRNA + S-methyl-5'-thioadenosine + H(+). Its function is as follows. Aminocarboxypropyltransferase that catalyzes the aminocarboxypropyl transfer on pseudouridine corresponding to position 914 in M.jannaschii 16S rRNA. It constitutes the last step in biosynthesis of the hypermodified N1-methyl-N3-(3-amino-3-carboxypropyl) pseudouridine (m1acp3-Psi). The polypeptide is 16S rRNA aminocarboxypropyltransferase (Sulfurisphaera tokodaii (strain DSM 16993 / JCM 10545 / NBRC 100140 / 7) (Sulfolobus tokodaii)).